The following is a 234-amino-acid chain: Protein SSP120 (234 aa).

The signal sequence occupies residues 1–22; that stretch reads MRFLRGFVFSLAFTLYKVTATA. EF-hand domains are found at residues 52-87 and 108-143; these read LKDY…NREE and MAKR…GNKF. Thr-212 is modified (phosphothreonine).

The polypeptide is Protein SSP120 (SSP120) (Saccharomyces cerevisiae (strain ATCC 204508 / S288c) (Baker's yeast)).